Here is a 356-residue protein sequence, read N- to C-terminus: Na(+)/H(+) exchange regulatory cofactor NHE-RF1 (356 aa).

An N-acetylserine modification is found at S2. A phosphoserine mark is found at S2 and S46. Residues 14 to 94 enclose the PDZ 1 domain; that stretch reads LCCLEKGPNG…AVRLLVVDPE (81 aa). The segment at 113 to 142 is disordered; that stretch reads AQEKSEHTEPPAAADTKKAGDQNEAEKSHL. Positions 151–231 constitute a PDZ 2 domain; sequence LCTMKKGPNG…EAKLLVVDKE (81 aa). The segment at 265–356 is disordered; it reads NSREALVEPA…SKKNELFSNL (92 aa). Residues S266, S277, S287, and S288 each carry the phosphoserine modification. Low complexity predominate over residues 272-288; sequence EPASESPRPALARSASS. T290 bears the Phosphothreonine mark. 2 positions are modified to phosphoserine: S291 and S299. Low complexity predominate over residues 307–317; it reads EPSSTSSSSDP. Over residues 346-356 the composition is skewed to basic and acidic residues; it reads WSKKNELFSNL.

In terms of assembly, homodimer, and heterodimer with NHERF2. Binds the N-termini of EZR, RDX and MSN. Binds the C-termini of PDGFRA, PDGFRB, ADRB2, NOS2 and CFTR. Binds ARHGAP17, EPI64, RACK1, OPRK1, GNAQ, CTNNB1 and PLCB3. Binds PDZK1. Interacts with CLCN3. Binds the C-terminus of PAG1. In resting T-cells, part of a PAG1-NHERF1-MSN complex which is disrupted upon TCR activation. Forms a complex with CFTR and SLC4A7. Forms a complex with SLC4A7 and ATP6V1B1. Interacts with TRPC4 (via the PDZ-binding domain). Directly interacts with HTR4. Interacts (via the PDZ 1 domain) with PODXL (via the C-terminal PDZ-binding motif DTHL); interaction is not detected in glomerular epithelium cells. Interacts (via the PDZ 1 domain) with PODXL (via the C-terminal PDZ-binding motif DTHL); the interaction take place early in the secretory pathway and is necessary for its apical membrane sorting. Interacts with SLC26A3. Interacts with MCC. Interacts with SLC34A1. Interacts (via the PDZ domains) with SLC26A6 isoform 4 and isoform 5. Interacts (via PDZ domains) with ACE2 (via PDZ-binding motif); the interaction may enhance ACE2 membrane residence.

It localises to the cytoplasm. Its subcellular location is the apical cell membrane. It is found in the cell projection. The protein localises to the filopodium. The protein resides in the ruffle. It localises to the microvillus. Its subcellular location is the endomembrane system. Its function is as follows. Scaffold protein that connects plasma membrane proteins with members of the ezrin/moesin/radixin family and thereby helps to link them to the actin cytoskeleton and to regulate their surface expression. Necessary for recycling of internalized ADRB2. Was first known to play a role in the regulation of the activity and subcellular location of SLC9A3. Necessary for cAMP-mediated phosphorylation and inhibition of SLC9A3. Involved in sperm capacitation. May participate in the regulation of the chloride and bicarbonate homeostasis in spermatozoa. May enhance Wnt signaling. May participate in HTR4 targeting to microvilli. Involved in the regulation of phosphate reabsorption in the renal proximal tubules. The protein is Na(+)/H(+) exchange regulatory cofactor NHE-RF1 (Nherf1) of Rattus norvegicus (Rat).